The chain runs to 262 residues: Small ribosomal subunit protein eS4 (262 aa).

One can recognise an S4 RNA-binding domain in the interval 42–105 (LPLIIMLRNR…GEFFRLLYDV (64 aa)).

This sequence belongs to the eukaryotic ribosomal protein eS4 family.

The protein is Small ribosomal subunit protein eS4 (RpS4) of Ixodes scapularis (Black-legged tick).